Here is a 173-residue protein sequence, read N- to C-terminus: Putative MgpC-like protein MPN_092 (173 aa).

It belongs to the MgpC family.

The polypeptide is Putative MgpC-like protein MPN_092 (Mycoplasma pneumoniae (strain ATCC 29342 / M129 / Subtype 1) (Mycoplasmoides pneumoniae)).